Here is a 477-residue protein sequence, read N- to C-terminus: Glycogen synthase (477 aa).

Lysine 15 provides a ligand contact to ADP-alpha-D-glucose.

Belongs to the glycosyltransferase 1 family. Bacterial/plant glycogen synthase subfamily.

It catalyses the reaction [(1-&gt;4)-alpha-D-glucosyl](n) + ADP-alpha-D-glucose = [(1-&gt;4)-alpha-D-glucosyl](n+1) + ADP + H(+). The protein operates within glycan biosynthesis; glycogen biosynthesis. In terms of biological role, synthesizes alpha-1,4-glucan chains using ADP-glucose. This Halorhodospira halophila (strain DSM 244 / SL1) (Ectothiorhodospira halophila (strain DSM 244 / SL1)) protein is Glycogen synthase.